The sequence spans 498 residues: Cytochrome P450 6B1 (498 aa).

Position 443 (cysteine 443) interacts with heme.

Belongs to the cytochrome P450 family. The cofactor is heme. As to expression, midgut microsome.

It localises to the endoplasmic reticulum membrane. The protein resides in the microsome membrane. The catalysed reaction is an organic molecule + reduced [NADPH--hemoprotein reductase] + O2 = an alcohol + oxidized [NADPH--hemoprotein reductase] + H2O + H(+). Enables the insect to feed on furanocoumarin-producing plants and evolved as an adaptation for detoxification of xanthotoxin and other furanocoumarins. In Papilio polyxenes (Black swallowtail butterfly), this protein is Cytochrome P450 6B1 (CYP6B1).